Consider the following 520-residue polypeptide: ATP synthase subunit alpha (520 aa).

Position 169–176 (169–176 (GDRKTGKT)) interacts with ATP.

It belongs to the ATPase alpha/beta chains family. In terms of assembly, F-type ATPases have 2 components, CF(1) - the catalytic core - and CF(0) - the membrane proton channel. CF(1) has five subunits: alpha(3), beta(3), gamma(1), delta(1), epsilon(1). CF(0) has three main subunits: a(1), b(2) and c(9-12). The alpha and beta chains form an alternating ring which encloses part of the gamma chain. CF(1) is attached to CF(0) by a central stalk formed by the gamma and epsilon chains, while a peripheral stalk is formed by the delta and b chains.

It is found in the cell membrane. It catalyses the reaction ATP + H2O + 4 H(+)(in) = ADP + phosphate + 5 H(+)(out). Produces ATP from ADP in the presence of a proton gradient across the membrane. The alpha chain is a regulatory subunit. The polypeptide is ATP synthase subunit alpha (Oenococcus oeni (strain ATCC BAA-331 / PSU-1)).